Reading from the N-terminus, the 284-residue chain is Bifunctional protein FolD (284 aa).

NADP(+) contacts are provided by residues 165–167 (GRS), Ser190, and Ile231.

The protein belongs to the tetrahydrofolate dehydrogenase/cyclohydrolase family. Homodimer.

It catalyses the reaction (6R)-5,10-methylene-5,6,7,8-tetrahydrofolate + NADP(+) = (6R)-5,10-methenyltetrahydrofolate + NADPH. It carries out the reaction (6R)-5,10-methenyltetrahydrofolate + H2O = (6R)-10-formyltetrahydrofolate + H(+). The protein operates within one-carbon metabolism; tetrahydrofolate interconversion. In terms of biological role, catalyzes the oxidation of 5,10-methylenetetrahydrofolate to 5,10-methenyltetrahydrofolate and then the hydrolysis of 5,10-methenyltetrahydrofolate to 10-formyltetrahydrofolate. The sequence is that of Bifunctional protein FolD from Streptococcus thermophilus (strain ATCC BAA-491 / LMD-9).